The primary structure comprises 874 residues: Alanine--tRNA ligase (874 aa).

The Zn(2+) site is built by His-562, His-566, Cys-664, and His-668.

This sequence belongs to the class-II aminoacyl-tRNA synthetase family. Zn(2+) serves as cofactor.

Its subcellular location is the cytoplasm. The enzyme catalyses tRNA(Ala) + L-alanine + ATP = L-alanyl-tRNA(Ala) + AMP + diphosphate. In terms of biological role, catalyzes the attachment of alanine to tRNA(Ala) in a two-step reaction: alanine is first activated by ATP to form Ala-AMP and then transferred to the acceptor end of tRNA(Ala). Also edits incorrectly charged Ser-tRNA(Ala) and Gly-tRNA(Ala) via its editing domain. This is Alanine--tRNA ligase from Shewanella putrefaciens (strain CN-32 / ATCC BAA-453).